The primary structure comprises 371 residues: 4-hydroxyphenylpyruvate dioxygenase-like protein (371 aa).

VOC domains are found at residues 7 to 135 (RLCH…LLQR) and 160 to 328 (HVDH…VFTK). Fe cation-binding residues include histidine 163, histidine 258, and glutamate 339.

Belongs to the 4HPPD family. Fe cation is required as a cofactor.

The protein resides in the mitochondrion. The enzyme catalyses 3-(4-hydroxyphenyl)pyruvate + O2 = (S)-4-hydroxymandelate + CO2. In terms of biological role, iron-dependent dioxygenase that catalyzes the conversion of 4-hydroxyphenylpyruvate (4-HPPA) to 4-hydroxymandelate (4-HMA) in the mitochondria, one of the steps in the biosynthesis of coenzyme Q10 from tyrosine. This Rattus norvegicus (Rat) protein is 4-hydroxyphenylpyruvate dioxygenase-like protein.